The chain runs to 137 residues: Large-conductance mechanosensitive channel (137 aa).

2 consecutive transmembrane segments (helical) span residues 9–29 (AFAV…GAAF) and 79–99 (IQSV…VKAI).

The protein belongs to the MscL family. As to quaternary structure, homopentamer.

Its subcellular location is the cell inner membrane. Its function is as follows. Channel that opens in response to stretch forces in the membrane lipid bilayer. May participate in the regulation of osmotic pressure changes within the cell. The sequence is that of Large-conductance mechanosensitive channel from Pseudomonas fluorescens (strain Pf0-1).